The following is a 328-amino-acid chain: Formimidoylglutamase (328 aa).

Residues H133, D159, H161, D163, D253, and D255 each coordinate Mn(2+).

Belongs to the arginase family. Mn(2+) is required as a cofactor.

It carries out the reaction N-formimidoyl-L-glutamate + H2O = formamide + L-glutamate. The protein operates within amino-acid degradation; L-histidine degradation into L-glutamate; L-glutamate from N-formimidoyl-L-glutamate (hydrolase route): step 1/1. Catalyzes the conversion of N-formimidoyl-L-glutamate to L-glutamate and formamide. This chain is Formimidoylglutamase, found in Streptococcus pyogenes serotype M18 (strain MGAS8232).